The primary structure comprises 116 residues: Putative iron-sulfur cluster insertion protein ErpA (116 aa).

3 residues coordinate iron-sulfur cluster: cysteine 44, cysteine 108, and cysteine 110.

Belongs to the HesB/IscA family. In terms of assembly, homodimer. Requires iron-sulfur cluster as cofactor.

Functionally, required for insertion of 4Fe-4S clusters. This Herminiimonas arsenicoxydans protein is Putative iron-sulfur cluster insertion protein ErpA.